The primary structure comprises 113 residues: Hydrogenase maturation factor HypA (113 aa).

Histidine 2 contacts Ni(2+). Residues cysteine 73, cysteine 76, cysteine 89, and cysteine 92 each coordinate Zn(2+).

Belongs to the HypA/HybF family.

Functionally, involved in the maturation of [NiFe] hydrogenases. Required for nickel insertion into the metal center of the hydrogenase. This chain is Hydrogenase maturation factor HypA, found in Cereibacter sphaeroides (Rhodobacter sphaeroides).